Consider the following 300-residue polypeptide: Protoheme IX farnesyltransferase 1 (300 aa).

The next 9 membrane-spanning stretches (helical) occupy residues 28-48 (VVAL…PTIL), 54-74 (VAGL…NHLI), 100-120 (ALLF…VFTN), 122-142 (LTAW…TAYL), 149-169 (NIVI…TAVT), 176-196 (ALLL…ALAI), 222-242 (CILL…LVGM), 243-263 (SGPL…YKAW), and 280-300 (FSIY…YLWA).

This sequence belongs to the UbiA prenyltransferase family. Protoheme IX farnesyltransferase subfamily.

The protein localises to the cell inner membrane. The catalysed reaction is heme b + (2E,6E)-farnesyl diphosphate + H2O = Fe(II)-heme o + diphosphate. It participates in porphyrin-containing compound metabolism; heme O biosynthesis; heme O from protoheme: step 1/1. Functionally, converts heme B (protoheme IX) to heme O by substitution of the vinyl group on carbon 2 of heme B porphyrin ring with a hydroxyethyl farnesyl side group. The sequence is that of Protoheme IX farnesyltransferase 1 from Shewanella sp. (strain MR-4).